The sequence spans 75 residues: uncharacterized protein (75 aa).

A helical membrane pass occupies residues 44-64; that stretch reads IINMIVIWAALIALFVKLYIL.

The protein localises to the host membrane. This is an uncharacterized protein from Ostreid herpesvirus 1 (isolate France) (OsHV-1).